Here is an 896-residue protein sequence, read N- to C-terminus: Phycobiliprotein ApcE (896 aa).

Cysteine 190 serves as a coordination point for (2R,3E)-phycocyanobilin. PBS-linker domains lie at aspartate 247–valine 427, leucine 508–aspartate 684, and glutamate 703–lysine 881.

It belongs to the phycobilisome linker protein family. In terms of assembly, heterodimer of ApcF (a variant beta-allophycocyanin). Phycobilisomes of this organism are composed of a two cylinder core, from which six rods radiate. The core is mainly composed of allophycocyanin alpha and beta chains and of minor components. In terms of processing, contains one covalently linked bilin chromophore. This protein autochromophorylates.

The protein resides in the cellular thylakoid membrane. Its function is as follows. This protein is postulated to act both as terminal energy acceptor (by its phycobilin-like domains) and as a linker polypeptide (by its repeats and arms) that stabilizes the phycobilisome core architecture. Has intrinsic bilin lyase activity. This Synechocystis sp. (strain ATCC 27184 / PCC 6803 / Kazusa) protein is Phycobiliprotein ApcE (apcE).